The chain runs to 137 residues: Small ribosomal subunit protein eS6 (137 aa).

Acidic residues predominate over residues 114–127 (LPVEEAPAEDAPES). The disordered stretch occupies residues 114–137 (LPVEEAPAEDAPESAEEKSEDKKE). The segment covering 128-137 (AEEKSEDKKE) has biased composition (basic and acidic residues).

This sequence belongs to the eukaryotic ribosomal protein eS6 family.

The sequence is that of Small ribosomal subunit protein eS6 from Nitrosopumilus maritimus (strain SCM1).